We begin with the raw amino-acid sequence, 160 residues long: MAEKTYPMTLTEKEQLEKELEELKLVRRPEIVERIKIARSYGDLSENSEYDAAKDEQAFVEGQISTLETKIRYAEIIDSDAVAKDEVAIGKTVIVQEVGTTDKDTYHIVGAAGADIFSGKISNESPIAQALIGKKTGDKVRIESPAATYDVEIISVEKTN.

A coiled-coil region spans residues 1 to 71; the sequence is MAEKTYPMTL…GQISTLETKI (71 aa).

It belongs to the GreA/GreB family.

Its function is as follows. Necessary for efficient RNA polymerase transcription elongation past template-encoded arresting sites. The arresting sites in DNA have the property of trapping a certain fraction of elongating RNA polymerases that pass through, resulting in locked ternary complexes. Cleavage of the nascent transcript by cleavage factors such as GreA or GreB allows the resumption of elongation from the new 3'terminus. GreA releases sequences of 2 to 3 nucleotides. The sequence is that of Transcription elongation factor GreA from Streptococcus pyogenes serotype M3 (strain ATCC BAA-595 / MGAS315).